Reading from the N-terminus, the 164-residue chain is Protein HIT1 (164 aa).

Cys-8, Cys-11, Cys-28, and Cys-32 together coordinate Zn(2+). The HIT-type; degenerate zinc-finger motif lies at Cys-8–Ala-49.

The chain is Protein HIT1 (HIT1) from Saccharomyces cerevisiae (strain ATCC 204508 / S288c) (Baker's yeast).